We begin with the raw amino-acid sequence, 442 residues long: Na(+)/H(+) antiporter NhaA (442 aa).

11 consecutive transmembrane segments (helical) span residues 32–52 (IGGGLLLAATVLALGWANSPW), 73–93 (LTLAQWAADGLLAIFFFVAGL), 111–131 (AVPVLAACGGVAVPAVLYALV), 139–159 (AGWAIPTATDIAFALAVLAVI), 170–190 (FLLTLAVVDDLLAIVIIAVVY), 193–213 (HLSILPLLGALVPLALFTLLV), 234–254 (VHASGVHATVAGVLLGFAVPV), 284–304 (VAVPIFAFFSAGVTVDGLSGL), 316–336 (VVLGLVVGKPLGIMAATFLVA), 352–372 (VLGLAVLAGIGFTVSLLIGEL), and 383–403 (HVKIAVLTGSLLAALLAAVVL). Residues 423–435 (HDGIPDVYQDLHR) are compositionally biased toward basic and acidic residues. The segment at 423–442 (HDGIPDVYQDLHRSSPRPWG) is disordered.

It belongs to the NhaA Na(+)/H(+) (TC 2.A.33) antiporter family.

The protein localises to the cell membrane. The catalysed reaction is Na(+)(in) + 2 H(+)(out) = Na(+)(out) + 2 H(+)(in). In terms of biological role, na(+)/H(+) antiporter that extrudes sodium in exchange for external protons. The sequence is that of Na(+)/H(+) antiporter NhaA from Frankia casuarinae (strain DSM 45818 / CECT 9043 / HFP020203 / CcI3).